The primary structure comprises 244 residues: 1-(5-phosphoribosyl)-5-[(5-phosphoribosylamino)methylideneamino] imidazole-4-carboxamide isomerase (244 aa).

Residue Asp10 is the Proton acceptor of the active site. The Proton donor role is filled by Asp129.

It belongs to the HisA/HisF family.

It localises to the cytoplasm. The catalysed reaction is 1-(5-phospho-beta-D-ribosyl)-5-[(5-phospho-beta-D-ribosylamino)methylideneamino]imidazole-4-carboxamide = 5-[(5-phospho-1-deoxy-D-ribulos-1-ylimino)methylamino]-1-(5-phospho-beta-D-ribosyl)imidazole-4-carboxamide. It participates in amino-acid biosynthesis; L-histidine biosynthesis; L-histidine from 5-phospho-alpha-D-ribose 1-diphosphate: step 4/9. In Rhodococcus erythropolis (strain PR4 / NBRC 100887), this protein is 1-(5-phosphoribosyl)-5-[(5-phosphoribosylamino)methylideneamino] imidazole-4-carboxamide isomerase.